We begin with the raw amino-acid sequence, 427 residues long: Homoserine O-acetyltransferase FUB5 (427 aa).

Residues 1 to 13 (MTTTTTAPALPTP) show a composition bias toward low complexity. The tract at residues 1-35 (MTTTTTAPALPTPIHDGLGNGTTYERSIPRPVNPF) is disordered. The region spanning 77 to 400 (NVMIICHALS…VSDDGHDAFL (324 aa)) is the AB hydrolase-1 domain. Ser-175 acts as the Nucleophile in catalysis. Residues 260–297 (RFGRDTGNKKKAKNKGSETLPSNSTPIHSQGGADETPV) are disordered. The span at 276–287 (SETLPSNSTPIH) shows a compositional bias: polar residues. Active-site residues include Asp-367 and His-396.

This sequence belongs to the AB hydrolase superfamily. MetX family.

The catalysed reaction is L-homoserine + acetyl-CoA = O-acetyl-L-homoserine + CoA. Its pathway is mycotoxin biosynthesis. Homoserine O-acetyltransferase; part of the gene cluster that mediates the biosynthesis of fusaric acid, a mycotoxin with low to moderate toxicity to animals and humans, but with high phytotoxic properties. L-aspartate is suggested as fusaric acid amino acid precursor that is activated and further processed to O-acetyl-L-homoserine by cluster enzymes aspartate kinase FUB3 and homoserine O-acetyltransferase FUB5, as well as enzymes of the primary metabolism. The polyketide synthase (PKS) FUB1 generates the triketide trans-2-hexenal which is presumptively released by the hydrolase FUB4 and linked to the NRPS-bound amino acid precursor by NAD(P)-dependent dehydrogenase FUB6. FUB1, FUB4, and the non-canonical NRPS Fub8 may form an enzyme complex. Further processing of the NRPS-bound intermediate might be carried out by FUB6 and the sulfhydrylase FUB7, enabling a spontaneous electrocyclization to close the carbon backbone of fusaric acid. Dihydrofusaric acid is likely to be released via reduction by the thioester reductase (TR) domain of FUB8 whereupon the final oxidation to fusaric acid may (also) be performed by the FMN-dependent dehydrogenase FUB9. This chain is Homoserine O-acetyltransferase FUB5, found in Gibberella fujikuroi (strain CBS 195.34 / IMI 58289 / NRRL A-6831) (Bakanae and foot rot disease fungus).